The primary structure comprises 132 residues: Mediator of RNA polymerase II transcription subunit 11 (132 aa).

The protein belongs to the Mediator complex subunit 11 family. As to quaternary structure, component of the Mediator complex.

It is found in the nucleus. Its function is as follows. Component of the Mediator complex, a coactivator involved in the regulated transcription of nearly all RNA polymerase II-dependent genes. Mediator functions as a bridge to convey information from gene-specific regulatory proteins to the basal RNA polymerase II transcription machinery. Mediator is recruited to promoters by direct interactions with regulatory proteins and serves as a scaffold for theQ9P086 assembly of a functional pre-initiation complex with RNA polymerase II and the general transcription factors. This Aedes aegypti (Yellowfever mosquito) protein is Mediator of RNA polymerase II transcription subunit 11 (MED11).